We begin with the raw amino-acid sequence, 398 residues long: Homeobox protein knotted-1-like 1 (398 aa).

Disordered stretches follow at residues 20–61 (SPIS…HHHQ), 78–102 (NCFR…ASSS), and 241–273 (LNNP…EIDP). The segment covering 23–56 (SSSNKNDNTSDTNNNNNNNNSSNYGPGYNNTNNN) has biased composition (low complexity). Residues 87–102 (PNNNNNPSVKSEASSS) are compositionally biased toward polar residues. The ELK domain occupies 279 to 299 (ELKNHLLKKYSGYLSSLKQEL). The segment at residues 300 to 363 (SKKKKKGKLP…NQRKRHWKPS (64 aa)) is a DNA-binding region (homeobox; TALE-type).

It belongs to the TALE/KNOX homeobox family. May form heterodimeric complex with the TALE/BELL proteins BEL1, BLH2, BLH8/PNF and BLH9/PNY. Interacts with OFP1, OFP2, OFP4, OFP6 and OFP12. Interacts with CCT7 and CCT8. Interacts with KNATM-B. Binds to AGO10/PNH. Interacts with BZIP30. As to expression, expressed in the vegetative meristem. Present in the base of flower primordia.

The protein localises to the nucleus. Its function is as follows. May play a role in meristem function, and may be involved in maintaining cells in an undifferentiated, meristematic state, and its expression disappears at the same time the shoot apex undergoes the transition from vegetative to reproductive development. Positive regulator of LATERAL ORGAN BOUNDARIES (LOB). Probably binds to the DNA sequence 5'-TGAC-3'. Able to traffic from the L1 to the L2/L3 layers of the meristem, presumably through plasmodesmata. This chain is Homeobox protein knotted-1-like 1 (KNAT1), found in Arabidopsis thaliana (Mouse-ear cress).